Consider the following 94-residue polypeptide: Serine protease inhibitor Kazal-type 13 (94 aa).

Positions 1–23 are cleaved as a signal peptide; sequence MAAFPHKIIFFLVCSTLTHVAFS. The 62-residue stretch at 33-94 folds into the Kazal-like domain; sequence RWPKPRCKMY…IKFEKYGKCD (62 aa). 3 cysteine pairs are disulfide-bonded: Cys-39–Cys-75, Cys-53–Cys-72, and Cys-61–Cys-93. Asn-55 carries an N-linked (GlcNAc...) asparagine glycan.

The protein localises to the secreted. In terms of biological role, may be a serine protease inhibitor. Essential for sperm maturation and fertility. Inhibits sperm acrosome reaction, protecting sperm from premature reaction. This is Serine protease inhibitor Kazal-type 13 (SPINK13) from Homo sapiens (Human).